The chain runs to 160 residues: Ribosomal RNA large subunit methyltransferase H (160 aa).

Residues Leu76, Gly108, and 127-132 contribute to the S-adenosyl-L-methionine site; that span reads LGKLTW.

Belongs to the RNA methyltransferase RlmH family. As to quaternary structure, homodimer.

The protein localises to the cytoplasm. The enzyme catalyses pseudouridine(1915) in 23S rRNA + S-adenosyl-L-methionine = N(3)-methylpseudouridine(1915) in 23S rRNA + S-adenosyl-L-homocysteine + H(+). In terms of biological role, specifically methylates the pseudouridine at position 1915 (m3Psi1915) in 23S rRNA. This Agrobacterium fabrum (strain C58 / ATCC 33970) (Agrobacterium tumefaciens (strain C58)) protein is Ribosomal RNA large subunit methyltransferase H.